We begin with the raw amino-acid sequence, 79 residues long: D-alanyl carrier protein (79 aa).

The Carrier domain maps to 1-77 (MDVKETILNI…KIISGVVELM (77 aa)). Ser-35 is modified (O-(pantetheine 4'-phosphoryl)serine).

Belongs to the DltC family. Post-translationally, 4'-phosphopantetheine is transferred from CoA to a specific serine of apo-DCP.

The protein resides in the cytoplasm. It functions in the pathway cell wall biogenesis; lipoteichoic acid biosynthesis. In terms of biological role, carrier protein involved in the D-alanylation of lipoteichoic acid (LTA). The loading of thioester-linked D-alanine onto DltC is catalyzed by D-alanine--D-alanyl carrier protein ligase DltA. The DltC-carried D-alanyl group is further transferred to cell membrane phosphatidylglycerol (PG) by forming an ester bond, probably catalyzed by DltD. D-alanylation of LTA plays an important role in modulating the properties of the cell wall in Gram-positive bacteria, influencing the net charge of the cell wall. In Streptococcus suis (strain 05ZYH33), this protein is D-alanyl carrier protein.